The sequence spans 196 residues: Adenylate kinase (196 aa).

10–15 contacts ATP; it reads GAGKGT. Positions 30-59 are NMP; that stretch reads STGDMLRAAVSAGTEIGKRAKAVMDAGGLV. AMP is bound by residues Thr31, Arg36, 57-59, 85-88, and Gln92; these read GLV and GYPR. The LID stretch occupies residues 126–142; that stretch reads NRVAETIAAGGTVRSDD. An ATP-binding site is contributed by Arg127. The AMP site is built by Arg139 and Arg150. Ala178 contributes to the ATP binding site.

It belongs to the adenylate kinase family. Monomer.

The protein localises to the cytoplasm. The catalysed reaction is AMP + ATP = 2 ADP. It participates in purine metabolism; AMP biosynthesis via salvage pathway; AMP from ADP: step 1/1. In terms of biological role, catalyzes the reversible transfer of the terminal phosphate group between ATP and AMP. Plays an important role in cellular energy homeostasis and in adenine nucleotide metabolism. The chain is Adenylate kinase from Agrobacterium fabrum (strain C58 / ATCC 33970) (Agrobacterium tumefaciens (strain C58)).